Consider the following 444-residue polypeptide: E1B 55 kDa protein (444 aa).

The disordered stretch occupies residues 1 to 42 (MEQDSDLESGRATNQRPPRVRVRGAGVRGRGRVRRRALSEGQ). 2 positions are modified to phosphoserine: S438 and S439.

It belongs to the adenoviridae E1B 55 kDa protein family. Interacts with host PML-4 and PML-5; this interaction promotes efficient subnuclear targeting of E1B-55K to PML nuclear bodies. Interacts with E4-ORF3 protein. Interacts with E4-ORF6 protein.

It localises to the host nucleus. It is found in the host cytoplasm. Functionally, plays a major role to prevent cellular inhibition of viral genome replication. Assembles an SCF-like E3 ubiquitin ligase complex based on the cellular proteins ELOB, ELOC, CUL5 and RBX1, in cooperation with viral E4orf6. This viral RING-type ligase ubiquitinates cellular substrates and targets them to proteasomal degradation: TP53/p53, LIG4, MRE11-RAD50-NBS1 (MRN) complex, ITGA3, DAXX and BLM. E1B-55K probably acts as the substrate-specific adapter of the SCF-like E3 ubiquitin ligase complex. Degradation of host TP53/p53 activity is essential for preventing E1A-induced TP53 accumulation that would otherwise lead to cell apoptosis and growth arrest. E1B-55K also inactivates TP53 transcription-factor activity by binding its transactivation domain. E1B-55K also functions as a SUMO1 E3 ligase for TP53 which causes the latter to be sequestered in promyelocytic leukemia (PML) nuclear bodies thereby contributing to maximal inhibition of TP53 function. The protein is E1B 55 kDa protein of Canis lupus familiaris (Dog).